A 1217-amino-acid chain; its full sequence is ATP-dependent helicase/nuclease subunit A (1217 aa).

The 466-residue stretch at 10–475 (VIWTDAQWQS…MDLSQNFRSR (466 aa)) folds into the UvrD-like helicase ATP-binding domain. Position 31–38 (31–38 (AAAGSGKT)) interacts with ATP. One can recognise a UvrD-like helicase C-terminal domain in the interval 491–786 (DEQVGEVNYD…RMMTIHSSKG (296 aa)).

It belongs to the helicase family. AddA subfamily. Heterodimer of AddA and AddB/RexB. The cofactor is Mg(2+).

The enzyme catalyses Couples ATP hydrolysis with the unwinding of duplex DNA by translocating in the 3'-5' direction.. It catalyses the reaction ATP + H2O = ADP + phosphate + H(+). In terms of biological role, the heterodimer acts as both an ATP-dependent DNA helicase and an ATP-dependent, dual-direction single-stranded exonuclease. Recognizes the chi site generating a DNA molecule suitable for the initiation of homologous recombination. The AddA nuclease domain is required for chi fragment generation; this subunit has the helicase and 3' -&gt; 5' nuclease activities. The chain is ATP-dependent helicase/nuclease subunit A from Staphylococcus aureus (strain bovine RF122 / ET3-1).